The sequence spans 391 residues: Nuclear hormone receptor family member nhr-218 (391 aa).

The nuclear receptor DNA-binding region spans 17-93 (PIPCQICTYQ…MGMKAEKIQQ (77 aa)). NR C4-type zinc fingers lie at residues 20–40 (CQIC…CRAC) and 56–76 (CKTR…CRLC). The 246-residue stretch at 146–391 (SRNYSDSPLT…DNFCNLFAMK (246 aa)) folds into the NR LBD domain.

It belongs to the nuclear hormone receptor family.

It localises to the nucleus. In terms of biological role, orphan nuclear receptor. This chain is Nuclear hormone receptor family member nhr-218 (nhr-218), found in Caenorhabditis elegans.